The primary structure comprises 466 residues: Asparagine--tRNA ligase (466 aa).

The protein belongs to the class-II aminoacyl-tRNA synthetase family. Homodimer.

The protein resides in the cytoplasm. The enzyme catalyses tRNA(Asn) + L-asparagine + ATP = L-asparaginyl-tRNA(Asn) + AMP + diphosphate + H(+). This chain is Asparagine--tRNA ligase, found in Shewanella frigidimarina (strain NCIMB 400).